Consider the following 225-residue polypeptide: Ribosomal RNA small subunit methyltransferase G (225 aa).

S-adenosyl-L-methionine-binding positions include Gly62, 113-114 (AE), and Lys130.

It belongs to the methyltransferase superfamily. RNA methyltransferase RsmG family.

Its subcellular location is the cytoplasm. In terms of biological role, specifically methylates the N7 position of a guanine in 16S rRNA. In Petrotoga mobilis (strain DSM 10674 / SJ95), this protein is Ribosomal RNA small subunit methyltransferase G.